Consider the following 421-residue polypeptide: Polymerase delta-interacting protein 3 (421 aa).

Ala-2 is subject to N-acetylalanine. Phosphoserine is present on Ser-5. Arg-33 carries the omega-N-methylarginine modification. Ser-44 and Ser-127 each carry phosphoserine. Thr-140 is modified (phosphothreonine). Residue Lys-200 forms a Glycyl lysine isopeptide (Lys-Gly) (interchain with G-Cter in SUMO2) linkage. A phosphoserine mark is found at Ser-204, Ser-215, and Ser-217. Residue Lys-223 forms a Glycyl lysine isopeptide (Lys-Gly) (interchain with G-Cter in SUMO2) linkage. The residue at position 244 (Ser-244) is a Phosphoserine. Lys-248 is covalently cross-linked (Glycyl lysine isopeptide (Lys-Gly) (interchain with G-Cter in SUMO2)). Ser-275 is subject to Phosphoserine. The 72-residue stretch at 280–351 (TKMTVNNLHP…QPMKCNLHMN (72 aa)) folds into the RRM domain. Over residues 370 to 379 (SMKKESELPR) the composition is skewed to basic and acidic residues. Positions 370–393 (SMKKESELPRRVNSASSSNPPAEV) are disordered. Residue Lys-372 forms a Glycyl lysine isopeptide (Lys-Gly) (interchain with G-Cter in SUMO2) linkage. Phosphoserine; by RPS6KB1 is present on residues Ser-383 and Ser-385. Residue Lys-418 forms a Glycyl lysine isopeptide (Lys-Gly) (interchain with G-Cter in SUMO2) linkage.

As to quaternary structure, interacts with POLD2. Interacts with NCBP1 and EIF4A3. Associates with the multiprotein exon junction complex (EJC). Interacts with RPS6KB1 (activated). Interacts with ERH. Interacts with THOC2, DDX39B and ZC3H11A; the interactions are ATP-dependent and indicative for an association with the TREX complex. Post-translationally, phosphorylated at Ser-383 and Ser-385 by RPS6KB1.

The protein localises to the nucleus. The protein resides in the nucleus speckle. Its subcellular location is the cytoplasm. In terms of biological role, is involved in regulation of translation. Is preferentially associated with CBC-bound spliced mRNA-protein complexes during the pioneer round of mRNA translation. Contributes to enhanced translational efficiency of spliced over nonspliced mRNAs. Recruits activated ribosomal protein S6 kinase beta-1 I/RPS6KB1 to newly synthesized mRNA. Involved in nuclear mRNA export; probably mediated by association with the TREX complex. This Homo sapiens (Human) protein is Polymerase delta-interacting protein 3 (POLDIP3).